Here is a 354-residue protein sequence, read N- to C-terminus: Rhodopsin (354 aa).

Residues 1-36 (MNGTEGPNFYVPMSNKTGIVRSPFEYPQYYLAEPWK) lie on the Extracellular side of the membrane. N-linked (GlcNAc...) asparagine glycans are attached at residues Asn-2 and Asn-15. The chain crosses the membrane as a helical span at residues 37–61 (YSVLAAYMFLLILLGLPINFMTLYV). Over 62 to 73 (TIQHKKLRTPLN) the chain is Cytoplasmic. Residues 74 to 96 (YILLNLAFANHFMVLCGFTITMY) form a helical membrane-spanning segment. The Extracellular segment spans residues 97 to 110 (TSLHGYFVFGQTGC). Cys-110 and Cys-187 are oxidised to a cystine. Residues 111 to 133 (YFEGFFATLGGEIALWSLVVLAI) form a helical membrane-spanning segment. The 'Ionic lock' involved in activated form stabilization signature appears at 134 to 136 (ERY). Residues 134-152 (ERYIVVCKPMSNFRFGENH) lie on the Cytoplasmic side of the membrane. Residues 153–173 (AMMGVAFTWIMALACAVPPLF) traverse the membrane as a helical segment. The Extracellular segment spans residues 174 to 202 (GWSRYIPEGMQCSCGVDYYTLKPEVNNES). Residues 203–224 (FVIYMFVVHFLIPLIIISFCYG) form a helical membrane-spanning segment. Over 225-252 (RLVCTVKEAAAQQQESATTQKAEKEVTR) the chain is Cytoplasmic. The chain crosses the membrane as a helical span at residues 253–274 (MVVIMVIFFLICWVPYAYVAFY). The Extracellular portion of the chain corresponds to 275–286 (IFTHQGSEFGPI). Residues 287-308 (FMTVPAFFAKSSAIYNPVIYIM) traverse the membrane as a helical segment. Lys-296 is modified (N6-(retinylidene)lysine). At 309–354 (LNKQFRNCMITTLCCGKNPFGDEDASSAATSKTEATSVSTSQVSPA) the chain is on the cytoplasmic side. Residues Cys-322 and Cys-323 are each lipidated (S-palmitoyl cysteine). Residues 331–354 (EDASSAATSKTEATSVSTSQVSPA) form a disordered region. A compositionally biased stretch (low complexity) spans 334 to 354 (SSAATSKTEATSVSTSQVSPA).

Belongs to the G-protein coupled receptor 1 family. Opsin subfamily. In terms of processing, contains one covalently linked retinal chromophore. Upon light absorption, the covalently bound 11-cis-retinal is converted to all-trans-retinal. After hydrolysis of the Schiff base and release of the covalently bound all-trans-retinal, active rhodopsin is regenerated by binding of a fresh molecule of 11-cis-retinal. As to expression, retina. Localized in the ventral part of the retina.

The protein resides in the membrane. Its subcellular location is the cell projection. It is found in the cilium. It localises to the photoreceptor outer segment. In terms of biological role, photoreceptor required for image-forming vision at low light intensity. Required for photoreceptor cell viability after birth. May use a mixture of retinal and 3-dehydroretinal as visual pigment. Light-induced isomerization of 11-cis to all-trans retinal triggers a conformational change that activates signaling via G-proteins. Subsequent receptor phosphorylation mediates displacement of the bound G-protein alpha subunit by arrestin and terminates signaling. The protein is Rhodopsin (RHO) of Aquarana catesbeiana (American bullfrog).